The chain runs to 246 residues: Homeobox protein Crxos (246 aa).

2 consecutive DNA-binding regions (homeobox) follow at residues 22-72 (WEQL…EMRP) and 129-182 (ELTD…RGYR). A Nuclear localization signal motif is present at residues 163-177 (RKDLIRSWFITQRHR).

This sequence belongs to the paired homeobox family. Specifically expressed during the preimplantation stages of embryonic development, between the four-cell to eight-cell stage and the morula stage. Expressed in adult testis. In terms of tissue distribution, detected in early embryos; expression decreases gradually with embryonic development. Also expressed in extraembryonic tissues after E14.5, expression level increases drastically until E18.5, immediately before partum.

Its subcellular location is the nucleus. Functionally, transcription factor that acts as a regulator of embryonic stem cell differentiation during the preimplantation stages of embryonic development. Transcription factor that acts as a positive regulator of embryonic stem cell differentiation. In terms of biological role, transcription factor that promotes embryonic stem cell pluripotency. Its function is as follows. Transcription factor that promotes embryonic stem cell pluripotency. Also involved in extraembryonic tissues development by promoting the expression of placental prolactin family genes. The polypeptide is Homeobox protein Crxos (Mus musculus (Mouse)).